A 1240-amino-acid chain; its full sequence is MPAGGRAGSLKDPDVAELFFKDDPEKLFSDLREIGHGSFGAVYFARDVRNSEVVAIKKMSYSGKQSNEKWQDIIKEVRFLQKLRHPNTIQYRGCYLREHTAWLVMEYCLGSASDLLEVHKKPLQEVEIAAVTHGALQGLAYLHSHNMIHRDVKAGNILLSEPGLVKLGDFGSASIMAPANSFVGTPYWMAPEVILAMDEGQYDGKVDVWSLGITCIELAERKPPLFNMNAMSALYHIAQNESPALQSGHWSEYFRNFVDSCLQKIPQDRPTSEVLLKHRFVLRERPPTVIMDLIQRTKDAVRELDNLQYRKMKKILFQEAPNGPGAEAPEEEELTPCSQEAEPYTHRAGTLTSLESSHSVPSMSISASSQSSSVNSLADASDNEEEEEEEEEEEEEEEEEGPESREMAMMQEGEHTVTSHSSIIHRLPGSDNLYDDPYQPEMTPGPLQPPAAPPTSTSSSARRRAYCRNRDHFATIRTASLVSRQIQEHEQDSALREQLSGYKRMRRQHQKQLLALESRLRGEREEHSGRLQRELEAQRAGFGTEAEKLARRHQAIGEKEARAAQAEERKFQQHILGQQKKELAALLEAQKRTYKLRKEQLKEELQENPSTPKREKAEWLLRQKEQLQQCQAEEEAGLLRRQRQYFELQCRQYKRKMLLARHSLDQDLLREDLNKKQTQKDLECALLLRQHEATRELELRQLQAVQRTRAELTRLQHQTELGNQLEYNKRREQELRQKHAAQVRQQPKSLKVRAGQLPMGLPATGALGPLSTGTPSEEQPCSSGQEAILDQRMLGEEEEAVPERRILGKEGTTLEPEEQRILGEEMGTFSSSPQKHRSLANEEDWDISEEMKEIRVPSLASQERNIIGQEEAAAWSLWEKEGGNLVDVEFKLGWVQGPVLTPVPEEEEEEEEEGGAPIGTHRDPGDGCPSPDIPPEPPPSHLRQYPTSQLPGLLSHGLLAGLSFAVGSSSGLLPLLLLLLLPLLAAQGGGGLQAALLALEVGLVGLGASYLFLCTALHLPPGLFLLLAQGTALLAVLSLSWRRGLMGVPLGLGAAWLLAWPSLALPLAAMAAGGKWVRQQGPQMRRGISRLWLRILLRLSPMVFRALQGCGAVGDRGLFALYPKTNKNGFRSRLPVPWPRQGNPRTTQHPLAQLTRVWAVCKGWNWRLARASHRLASCLPPWAVHILASWGLLKGERPSRIPRLLPRSQRRLGLSASRQLPPGTVAGRRSQTRRTLPPWR.

A Phosphoserine modification is found at serine 9. The Protein kinase domain maps to 28-281 (FSDLREIGHG…SEVLLKHRFV (254 aa)). ATP-binding positions include 34–42 (IGHGSFGAV) and lysine 57. Residue aspartate 151 is the Proton acceptor of the active site. Serine 181 carries the post-translational modification Phosphoserine. Positions 320-463 (APNGPGAEAP…PTSTSSSARR (144 aa)) are disordered. Residues 356-380 (SSHSVPSMSISASSQSSSVNSLADA) show a composition bias toward low complexity. Residues 381-401 (SDNEEEEEEEEEEEEEEEEEG) are compositionally biased toward acidic residues. Residues 402-417 (PESREMAMMQEGEHTV) are compositionally biased toward basic and acidic residues. A Phosphoserine modification is found at serine 422. Coiled coils occupy residues 493–528 (SALR…EEHS) and 581–608 (KELA…LQEN). Serine 663 bears the Phosphoserine mark. A coiled-coil region spans residues 688–720 (LRQHEATRELELRQLQAVQRTRAELTRLQHQTE). A phosphoserine mark is found at serine 782, serine 830, and serine 832. Residues 805–934 (RILGKEGTTL…GDGCPSPDIP (130 aa)) adopt a coiled-coil conformation. The segment at 899–946 (VLTPVPEEEEEEEEEGGAPIGTHRDPGDGCPSPDIPPEPPPSHLRQYP) is disordered. The segment covering 904-914 (PEEEEEEEEEG) has biased composition (acidic residues). A compositionally biased stretch (pro residues) spans 931-940 (PDIPPEPPPS). The next 5 membrane-spanning stretches (helical) occupy residues 972-992 (LLPL…GGGL), 994-1014 (AALL…LFLC), 1019-1039 (LPPG…VLSL), 1045-1065 (LMGV…SLAL), and 1175-1195 (LASC…LLKG). Position 999 is an omega-N-methylarginine (leucine 999). The residue at position 1037 (leucine 1037) is a Phosphoserine. Residues 1212–1240 (LGLSASRQLPPGTVAGRRSQTRRTLPPWR) form a disordered region.

Belongs to the protein kinase superfamily. STE Ser/Thr protein kinase family. STE20 subfamily. In terms of assembly, interacts with MAP2K3 and MAP2K6. Self-associates. Interacts with tubulins. Interacts with MAP3K7 and interferes with MAP3K7-binding to CHUK and thus prevents NF-kappa-B activation. Isoform 2 interacts with PCDH8; this complex may also include CDH2. Mg(2+) is required as a cofactor. In terms of processing, autophosphorylated. Phosphorylated by ATM. Phosphorylated on Ser-1037 by MAPK14. This phosphorylation is required PCDH8 for endocytosis.

It localises to the cytoplasmic vesicle membrane. The protein localises to the cytoplasm. It is found in the cytoskeleton. Its subcellular location is the cell projection. The protein resides in the dendrite. The enzyme catalyses L-seryl-[protein] + ATP = O-phospho-L-seryl-[protein] + ADP + H(+). The catalysed reaction is L-threonyl-[protein] + ATP = O-phospho-L-threonyl-[protein] + ADP + H(+). Functionally, serine/threonine-protein kinase involved in different processes such as membrane blebbing and apoptotic bodies formation DNA damage response and MAPK14/p38 MAPK stress-activated MAPK cascade. Phosphorylates itself, MBP, activated MAPK8, MAP2K3, MAP2K6 and tubulins. Activates the MAPK14/p38 MAPK signaling pathway through the specific activation and phosphorylation of the upstream MAP2K3 and MAP2K6 kinases. In response to DNA damage, involved in the G2/M transition DNA damage checkpoint by activating the p38/MAPK14 stress-activated MAPK cascade, probably by mediating phosphorylation of upstream MAP2K3 and MAP2K6 kinases. May affect microtubule organization and stability. May play a role in the osmotic stress-MAPK8 pathway. Prevents MAP3K7-mediated activation of CHUK, and thus NF-kappa-B activation. Isoform 2, but not isoform 1, is required for PCDH8 endocytosis. Following homophilic interactions between PCDH8 extracellular domains, isoform 2 phosphorylates and activates MAPK14/p38 MAPK which in turn phosphorylates isoform 2. This process leads to PCDH8 endocytosis and CDH2 cointernalization. Both isoforms are involved in MAPK14/p38 MAPK activation. The sequence is that of Serine/threonine-protein kinase TAO2 (Taok2) from Mus musculus (Mouse).